A 149-amino-acid chain; its full sequence is Putative pre-16S rRNA nuclease (149 aa).

Belongs to the YqgF nuclease family.

It is found in the cytoplasm. Its function is as follows. Could be a nuclease involved in processing of the 5'-end of pre-16S rRNA. The protein is Putative pre-16S rRNA nuclease of Cupriavidus metallidurans (strain ATCC 43123 / DSM 2839 / NBRC 102507 / CH34) (Ralstonia metallidurans).